Consider the following 102-residue polypeptide: Vacuolar ATPase assembly integral membrane protein VMA21 homolog (102 aa).

The Cytoplasmic segment spans residues 1–33 (MTTSSSSEPSTMATLFPNFRDQEVQSAVKNLLT). A helical transmembrane segment spans residues 34-54 (YSLVILIVPLASMFLLKQFFF). The Lumenal portion of the chain corresponds to 55 to 67 (EGLLGVSANDALT). Residues 68-88 (YSAIIAVVLVHVVLGIWLFAA) form a helical membrane-spanning segment. Residues 89-102 (TKQEDRKKRENKQD) are Cytoplasmic-facing.

It belongs to the VMA21 family.

It is found in the endoplasmic reticulum membrane. Its subcellular location is the endoplasmic reticulum-Golgi intermediate compartment membrane. The protein resides in the cytoplasmic vesicle. The protein localises to the COPII-coated vesicle membrane. Functionally, required for the assembly of the V0 complex of the vacuolar ATPase (V-ATPase) in the endoplasmic reticulum. The protein is Vacuolar ATPase assembly integral membrane protein VMA21 homolog of Caenorhabditis elegans.